Reading from the N-terminus, the 493-residue chain is Activin receptor type-1C (493 aa).

Positions 1–25 (MTPARRSALSLALLLVALASDLAAG) are cleaved as a signal peptide. Residues 26 to 113 (LKCVCLLCDS…PDAPRLGPTE (88 aa)) lie on the Extracellular side of the membrane. The chain crosses the membrane as a helical span at residues 114–134 (LTVVITVPVCLLSIAAMLTIW). Topologically, residues 135–493 (ACQDRQCTYR…QLCVKEDCKA (359 aa)) are cytoplasmic. One can recognise a GS domain in the interval 165–194 (KTLKDLIYDATASGSGSGPPLLVQRTIART). One can recognise a Protein kinase domain in the interval 195-485 (IVLQEIVGKG…LRVKKTISQL (291 aa)). ATP contacts are provided by residues 201-209 (VGKGRFGEV) and lysine 222. Catalysis depends on aspartate 323, which acts as the Proton acceptor.

Belongs to the protein kinase superfamily. TKL Ser/Thr protein kinase family. TGFB receptor subfamily. Binds the type 2 receptor protein ACVR2A. Mg(2+) is required as a cofactor. The cofactor is Mn(2+). Expressed in brain, kidney, lung, liver, testis, ovary, adrenal gland, heart, prostate, gastrointestinal tract, and spleen. Distributed throughout both adult and embryonic central nervous system and pancreatic islet cells.

The protein localises to the membrane. It catalyses the reaction L-threonyl-[receptor-protein] + ATP = O-phospho-L-threonyl-[receptor-protein] + ADP + H(+). The enzyme catalyses L-seryl-[receptor-protein] + ATP = O-phospho-L-seryl-[receptor-protein] + ADP + H(+). Serine/threonine protein kinase which forms a receptor complex on ligand binding. The receptor complex consists of 2 type II and 2 type I transmembrane serine/threonine kinases. Type II receptors phosphorylate and activate type I receptors which autophosphorylate, then bind and activate SMAD transcriptional regulators, SMAD2 and SMAD3. Receptor for activin AB, activin B, activin E and NODAL. Upon NODAL binding, activation results in increased apoptosis and reduced proliferation through suppression of AKT signaling and the activation of Smad2-dependent signaling pathway in pancreatic beta-cells, trophoblasts, epithelial or neuronal cells. Acts as a positive regulator for macrophage activation partially through down-regulation of PPARG expression. This chain is Activin receptor type-1C, found in Rattus norvegicus (Rat).